The sequence spans 92 residues: Small ribosomal subunit protein uS19c (92 aa).

The protein belongs to the universal ribosomal protein uS19 family.

It is found in the plastid. It localises to the chloroplast. Its function is as follows. Protein S19 forms a complex with S13 that binds strongly to the 16S ribosomal RNA. This Nandina domestica (Heavenly bamboo) protein is Small ribosomal subunit protein uS19c.